The primary structure comprises 213 residues: Large ribosomal subunit protein uL23 (213 aa).

The large ribosomal subunit protein uL23 stretch occupies residues 1–117 (MNHNEIIKYP…KSTSELKLEE (117 aa)). The interval 118 to 213 (KIAAKIAAKE…TTKKTTTKKV (96 aa)) is unknown.

The protein belongs to the universal ribosomal protein uL23 family. As to quaternary structure, part of the 50S ribosomal subunit. Contacts protein L29, and trigger factor when it is bound to the ribosome.

Its function is as follows. One of the early assembly proteins it binds 23S rRNA. One of the proteins that surrounds the polypeptide exit tunnel on the outside of the ribosome. Forms the main docking site for trigger factor binding to the ribosome. The polypeptide is Large ribosomal subunit protein uL23 (Mycoplasma mobile (strain ATCC 43663 / 163K / NCTC 11711) (Mesomycoplasma mobile)).